A 485-amino-acid chain; its full sequence is Aldehyde dehydrogenase family 3 member A2 (485 aa).

Residues M1–K463 are Cytoplasmic-facing. G185–G190 contributes to the NAD(+) binding site. Catalysis depends on residues E207 and C241. A Phosphoserine modification is found at S293. A helical membrane pass occupies residues L464–Y484. The Prevents secretion from ER signature appears at K481–Y484.

The protein belongs to the aldehyde dehydrogenase family. Homodimer.

Its subcellular location is the microsome membrane. It localises to the endoplasmic reticulum membrane. The catalysed reaction is an aldehyde + NAD(+) + H2O = a carboxylate + NADH + 2 H(+). The enzyme catalyses a fatty aldehyde + NAD(+) + H2O = a fatty acid + NADH + 2 H(+). It catalyses the reaction (2E)-hexadecenal + NAD(+) + H2O = (E)-hexadec-2-enoate + NADH + 2 H(+). It carries out the reaction hexadecanoate + NADH + 2 H(+) = hexadecanal + NAD(+) + H2O. The catalysed reaction is 22-oxodocosanoate + NAD(+) + H2O = docosanedioate + NADH + 2 H(+). The enzyme catalyses 2,6,10,14-tetramethylpentadecanal + NAD(+) + H2O = 2,6,10,14-tetramethylpentadecanoate + NADH + 2 H(+). It catalyses the reaction octadecanal + NAD(+) + H2O = octadecanoate + NADH + 2 H(+). It carries out the reaction dodecanoate + NADH + 2 H(+) = dodecanal + NAD(+) + H2O. The catalysed reaction is decanal + NAD(+) + H2O = decanoate + NADH + 2 H(+). The enzyme catalyses tetradecanal + NAD(+) + H2O = tetradecanoate + NADH + 2 H(+). It catalyses the reaction octanal + NAD(+) + H2O = octanoate + NADH + 2 H(+). It carries out the reaction heptanal + NAD(+) + H2O = heptanoate + NADH + 2 H(+). The catalysed reaction is (2E,6E)-farnesal + NAD(+) + H2O = (2E,6E)-farnesoate + NADH + 2 H(+). Its function is as follows. Catalyzes the oxidation of medium and long-chain aliphatic aldehydes to fatty acids. Active on a variety of saturated and unsaturated aliphatic aldehydes between 6 and 24 carbons in length. Responsible for conversion of the sphingosine 1-phosphate (S1P) degradation product hexadecenal to hexadecenoic acid. The sequence is that of Aldehyde dehydrogenase family 3 member A2 (ALDH3A2) from Pongo abelii (Sumatran orangutan).